We begin with the raw amino-acid sequence, 728 residues long: Fatty acid oxidation complex subunit alpha (728 aa).

The segment at 1–189 (MLYQSETIQV…KNGLIDAVVP (189 aa)) is enoyl-CoA hydratase/isomerase. Residue Asp-296 participates in substrate binding. A 3-hydroxyacyl-CoA dehydrogenase region spans residues 311-728 (TIPEYAAVLG…TIAVSTGKTA (418 aa)). NAD(+) is bound by residues Met-324, Asp-343, 400-402 (VVE), Lys-407, and Ser-429. Residue His-450 is the For 3-hydroxyacyl-CoA dehydrogenase activity of the active site. NAD(+) is bound at residue Asn-453. Residues Asn-500 and Tyr-660 each coordinate substrate.

It in the N-terminal section; belongs to the enoyl-CoA hydratase/isomerase family. In the C-terminal section; belongs to the 3-hydroxyacyl-CoA dehydrogenase family. Heterotetramer of two alpha chains (FadB) and two beta chains (FadA).

It carries out the reaction a (3S)-3-hydroxyacyl-CoA + NAD(+) = a 3-oxoacyl-CoA + NADH + H(+). The catalysed reaction is a (3S)-3-hydroxyacyl-CoA = a (2E)-enoyl-CoA + H2O. It catalyses the reaction a 4-saturated-(3S)-3-hydroxyacyl-CoA = a (3E)-enoyl-CoA + H2O. The enzyme catalyses (3S)-3-hydroxybutanoyl-CoA = (3R)-3-hydroxybutanoyl-CoA. It carries out the reaction a (3Z)-enoyl-CoA = a 4-saturated (2E)-enoyl-CoA. The catalysed reaction is a (3E)-enoyl-CoA = a 4-saturated (2E)-enoyl-CoA. The protein operates within lipid metabolism; fatty acid beta-oxidation. Involved in the aerobic and anaerobic degradation of long-chain fatty acids via beta-oxidation cycle. Catalyzes the formation of 3-oxoacyl-CoA from enoyl-CoA via L-3-hydroxyacyl-CoA. It can also use D-3-hydroxyacyl-CoA and cis-3-enoyl-CoA as substrate. This is Fatty acid oxidation complex subunit alpha from Photorhabdus laumondii subsp. laumondii (strain DSM 15139 / CIP 105565 / TT01) (Photorhabdus luminescens subsp. laumondii).